The following is a 130-amino-acid chain: P antigen family member 5 (130 aa).

2 disordered regions span residues 1–88 (MQAP…TDVE) and 101–130 (DAPGDGPDVREGTLPTFDPTKVLEAGEGQL). Over residues 14-26 (TREEVRDMSEHVT) the composition is skewed to basic and acidic residues. Over residues 27–42 (RSQSSERGNDQESSQP) the composition is skewed to polar residues. 2 positions are modified to phosphothreonine: Thr113 and Thr116.

Belongs to the GAGE family.

The polypeptide is P antigen family member 5 (PAGE5) (Homo sapiens (Human)).